Reading from the N-terminus, the 231-residue chain is Transcriptional regulator NRG1 (231 aa).

Residue Ser163 is modified to Phosphoserine. C2H2-type zinc fingers lie at residues 174–196 and 202–226; these read YICKICARGFTTSGHLARHNRIH and HCCPYKGCTQRFSRHDNCLQHYRTH.

The protein localises to the nucleus. In terms of biological role, transcriptional repressor involved in regulation of glucose repression. Binds to UAS-1 in the STA1 promoter. This chain is Transcriptional regulator NRG1 (NRG1), found in Saccharomyces cerevisiae (strain ATCC 204508 / S288c) (Baker's yeast).